Here is a 435-residue protein sequence, read N- to C-terminus: CUB and peptidase domain-containing protein 1 (435 aa).

An N-terminal signal peptide occupies residues 1 to 16 (SGFHLSFSFFRRAVCG). Positions 25–261 (IVGGTVAPIN…LKSWITGKIS (237 aa)) constitute a Peptidase S1 domain. The cysteines at positions 50 and 66 are disulfide-linked. Catalysis depends on charge relay system residues H65 and D116. Disulfide bonds link C151–C218, C182–C197, C208–C237, and C322–C341. Residue S212 is the Charge relay system of the active site. The CUB domain maps to 256-378 (ITGKISRSPA…SGFHLSFSFF (123 aa)).

It belongs to the peptidase S1 family. As to expression, component of the acid-insoluble organic matrix of the aragonitic skeleton (at protein level).

It is found in the secreted. This is CUB and peptidase domain-containing protein 1 from Acropora millepora (Staghorn coral).